Consider the following 484-residue polypeptide: Sodium/pantothenate symporter (484 aa).

The next 13 membrane-spanning stretches (helical) occupy residues leucine 3–alanine 23, glycine 45–glycine 65, leucine 74–leucine 94, valine 124–isoleucine 144, leucine 162–valine 182, threonine 190–valine 210, phenylalanine 238–valine 258, methionine 273–leucine 293, valine 307–alanine 327, valine 366–leucine 386, leucine 397–tryptophan 417, glycine 424–isoleucine 444, and leucine 446–glycine 466.

The protein belongs to the sodium:solute symporter (SSF) (TC 2.A.21) family.

It localises to the cell inner membrane. The enzyme catalyses (R)-pantothenate(in) + Na(+)(in) = (R)-pantothenate(out) + Na(+)(out). Functionally, catalyzes the sodium-dependent uptake of extracellular pantothenate. This chain is Sodium/pantothenate symporter (panF), found in Haemophilus influenzae (strain ATCC 51907 / DSM 11121 / KW20 / Rd).